The sequence spans 470 residues: ADAM DEC1 (470 aa).

Positions 1-30 are cleaved as a signal peptide; it reads MLRGISQLPAVATMSWVLLPVLWLIVQTQA. The propeptide occupies 31–205; the sequence is IAIKQTPELT…QGPIRISRSL (175 aa). Asparagine 61 carries N-linked (GlcNAc...) asparagine glycosylation. Positions 173–200 are disordered; the sequence is FTSNQEEQDPANHTCGVKSTDGKQGPIR. Asparagine 184 is a glycosylation site (N-linked (GlcNAc...) (complex) asparagine). The Peptidase M12B domain occupies 218 to 412; that stretch reads KYIDLYLVLD…QKPKCLLQAP (195 aa). Asparagine 237 carries N-linked (GlcNAc...) asparagine glycosylation. Intrachain disulfides connect cysteine 328–cysteine 407 and cysteine 369–cysteine 374. Histidine 352 contacts Zn(2+). Residue glutamate 353 is part of the active site. Positions 356 and 362 each coordinate Zn(2+). In terms of domain architecture, Disintegrin spans 420–470; the sequence is TPVCGNHLLEVGEDCDCGSPKECTNLCCEALTCKLKPGTDCGGDAPNHTTE. An N-linked (GlcNAc...) asparagine glycan is attached at asparagine 466.

It depends on Zn(2+) as a cofactor. Expressed highly in the small intestine and appendix, moderately in lymph node, mucosal lining of the colon, thymus, spleen and very weakly in the bone marrow. Predominantly expressed in dendritic cells (DC) of the germinal center. Weakly expressed in monocyte and highly expressed in macrophage. Absent in immature DC.

The protein resides in the secreted. May play an important role in the control of the immune response and during pregnancy. The sequence is that of ADAM DEC1 (ADAMDEC1) from Homo sapiens (Human).